We begin with the raw amino-acid sequence, 1944 residues long: uncharacterized protein (1944 aa).

The tract at residues 908-999 (SQNLNFLKSK…SESEEESSNG (92 aa)) is disordered. 2 stretches are compositionally biased toward basic and acidic residues: residues 916–929 (SKQETTQRIRESAK) and 939–949 (LSEKLNSDNHI). Residues 985–996 (SDEDTSESEEES) are compositionally biased toward acidic residues. 1293 to 1300 (GPPGTGKT) provides a ligand contact to ATP. A disordered region spans residues 1824 to 1944 (QEAHKVKKRH…PPKVEHFKRK (121 aa)). 2 stretches are compositionally biased toward basic and acidic residues: residues 1843–1852 (GTERDEDIPN) and 1869–1891 (KVTKPRLDESSSSKQDVLNKIDE). The segment covering 1912 to 1922 (GHMKKSKKPKS) has biased composition (basic residues).

The protein belongs to the DNA2/NAM7 helicase family.

The protein localises to the nucleus. This is an uncharacterized protein from Schizosaccharomyces pombe (strain 972 / ATCC 24843) (Fission yeast).